The primary structure comprises 305 residues: Oxygen-dependent coproporphyrinogen-III oxidase (305 aa).

Ser-97 contacts substrate. 2 residues coordinate a divalent metal cation: His-101 and His-111. His-111 serves as the catalytic Proton donor. 113-115 (NVR) lines the substrate pocket. A divalent metal cation is bound by residues His-150 and His-180. The important for dimerization stretch occupies residues 245 to 280 (YVEFNLVWDRGTHFGLQSGGRTESILLSMPPLASWA). 263–265 (GGR) contributes to the substrate binding site.

This sequence belongs to the aerobic coproporphyrinogen-III oxidase family. In terms of assembly, homodimer. It depends on a divalent metal cation as a cofactor.

It is found in the cytoplasm. The catalysed reaction is coproporphyrinogen III + O2 + 2 H(+) = protoporphyrinogen IX + 2 CO2 + 2 H2O. It functions in the pathway porphyrin-containing compound metabolism; protoporphyrin-IX biosynthesis; protoporphyrinogen-IX from coproporphyrinogen-III (O2 route): step 1/1. Its function is as follows. Involved in the heme biosynthesis. Catalyzes the aerobic oxidative decarboxylation of propionate groups of rings A and B of coproporphyrinogen-III to yield the vinyl groups in protoporphyrinogen-IX. The chain is Oxygen-dependent coproporphyrinogen-III oxidase from Variovorax paradoxus (strain S110).